The following is a 508-amino-acid chain: T-complex protein 1 subunit beta (508 aa).

This sequence belongs to the TCP-1 chaperonin family. In terms of assembly, component of the T-complex protein 1 (TCP1) complex.

It localises to the cytoplasm. Molecular chaperone; assists the folding of proteins upon ATP hydrolysis. This Encephalitozoon cuniculi (strain GB-M1) (Microsporidian parasite) protein is T-complex protein 1 subunit beta (CCT2).